Here is a 557-residue protein sequence, read N- to C-terminus: Elongator complex protein 3 (557 aa).

Residues arginine 91 to proline 381 form the Radical SAM core domain. [4Fe-4S] cluster-binding residues include cysteine 108, cysteine 118, and cysteine 121. Lysine 173 lines the acetyl-CoA pocket. The 153-residue stretch at threonine 405–isoleucine 557 folds into the N-acetyltransferase domain. Residue lysine 453 forms a Glycyl lysine isopeptide (Lys-Gly) (interchain with G-Cter in ubiquitin) linkage. Acetyl-CoA contacts are provided by residues glutamate 485–valine 488, phenylalanine 508–threonine 510, and tyrosine 541.

The protein belongs to the ELP3 family. As to quaternary structure, component of the elongator complex which consists of ELP1/IKI3, ELP2, ELP3, ELP4, ELP5/IKI1 and ELP6. The elongator complex is composed of two copies of the Elp123 subcomplex (composed of ELP1/IKI3, ELP2 and ELP3) and two copies of the Elp456 subcomplex (composed of ELP4, ELP5/IKI1 and ELP6). The Elp123 subcomplex forms a two-lobed scaffold, which binds the Elp456 subcomplex asymmetrically. In each lobe, ELP2 is tightly sandwiched between ELP1/IKI3 and ELP3. The Elp123 subcomplex binds tRNA through ELP1/IKI3 and ELP3 and can bind 2 tRNAs simultaneously. tRNA-binding induces conformational rearrangements which precisely position the targeted anticodon base in the active site. ELP3 interacts with KTI11/DPH3. ELP3 interacts with KTI12. The Elp456 subcomplex binds tRNA and has ATPase activity. The cofactor is [4Fe-4S] cluster.

It localises to the cytoplasm. The protein localises to the nucleus. The catalysed reaction is uridine(34) in tRNA + acetyl-CoA + S-adenosyl-L-methionine + H2O = 5-(carboxymethyl)uridine(34) in tRNA + 5'-deoxyadenosine + L-methionine + CoA + 2 H(+). It functions in the pathway tRNA modification; 5-methoxycarbonylmethyl-2-thiouridine-tRNA biosynthesis. Catalytic tRNA acetyltransferase subunit of the elongator complex which is required for multiple tRNA modifications, including mcm5U (5-methoxycarbonylmethyl uridine), mcm5s2U (5-methoxycarbonylmethyl-2-thiouridine), and ncm5U (5-carbamoylmethyl uridine). In the elongator complex, acts as a tRNA uridine(34) acetyltransferase, which mediates formation of carboxymethyluridine in the wobble base at position 34 in tRNAs. The complex functions as a gamma-toxin target (TOT); disruption of the complex confers resistance to Kluyveromyces lactis toxin zymocin (pGKL1 killer toxin). May also be involved in sensitivity to Pichia inositovora toxin. Independently, ELP3 may be involved in polarized exocytosis. The chain is Elongator complex protein 3 from Saccharomyces cerevisiae (strain ATCC 204508 / S288c) (Baker's yeast).